A 429-amino-acid polypeptide reads, in one-letter code: ATP-dependent RNA helicase RhlB (429 aa).

Residues 9–37 carry the Q motif motif; it reads EKFAQMGLEPEVLAGLESKGFHYCTPIQA. One can recognise a Helicase ATP-binding domain in the interval 40 to 219; sequence LPLLVEGHDL…YEHMNHPEHV (180 aa). 53–60 serves as a coordination point for ATP; it reads AQTGTGKT. The short motif at 165–168 is the DEAD box element; that stretch reads DEAD. Positions 243-390 constitute a Helicase C-terminal domain; sequence KMLLLLSLME…VSKYDREALL (148 aa). The disordered stretch occupies residues 395–429; it reads APKRVVRNRQPVNRNMRDRQGGGNSNNRRRPPRKS.

Belongs to the DEAD box helicase family. RhlB subfamily. Component of the RNA degradosome, which is a multiprotein complex involved in RNA processing and mRNA degradation.

It is found in the cytoplasm. It carries out the reaction ATP + H2O = ADP + phosphate + H(+). Its function is as follows. DEAD-box RNA helicase involved in RNA degradation. Has RNA-dependent ATPase activity and unwinds double-stranded RNA. This Aeromonas salmonicida (strain A449) protein is ATP-dependent RNA helicase RhlB.